We begin with the raw amino-acid sequence, 722 residues long: Polyribonucleotide nucleotidyltransferase (722 aa).

Positions 487 and 493 each coordinate Mg(2+). A KH domain is found at 554-613 (PRIETFKIPTDKIREVIGTGGKVIREIVEKTGAKVNIEDDGTVKVASSDGESIKAAIKWI). Residues 623 to 691 (GEIYEGTVVK…DRGKTRLSMK (69 aa)) form the S1 motif domain. The tract at residues 697-722 (TGEDLEAKQKAEAKAEGEAPAQAAGE) is disordered. Residues 701 to 713 (LEAKQKAEAKAEG) show a composition bias toward basic and acidic residues.

Belongs to the polyribonucleotide nucleotidyltransferase family. Mg(2+) is required as a cofactor.

Its subcellular location is the cytoplasm. The enzyme catalyses RNA(n+1) + phosphate = RNA(n) + a ribonucleoside 5'-diphosphate. In terms of biological role, involved in mRNA degradation. Catalyzes the phosphorolysis of single-stranded polyribonucleotides processively in the 3'- to 5'-direction. This Rhodopseudomonas palustris (strain ATCC BAA-98 / CGA009) protein is Polyribonucleotide nucleotidyltransferase.